Here is a 309-residue protein sequence, read N- to C-terminus: MNQLPHVTVLLGEAVEALVSNPEGTYIDGTFGRGGHSALILQHLASEGRLLAIDKDLAAIATAREKFATDARFAIAHDSFASLKNLAAERGLVGRVQGILLDLGVSSPQLDEAERGFSFMQDGPLDMRMDQTRGPSAAEWVNTASEDEIAWVLREYGEERFAKRMARAIIAERQKRPFVRTGHLAEVIKAANPAWEKGKHPATRAFQAIRIQVNRELEDLEAVLAQAVDVLAPGGRLVVISFHSLEDRLVKRFIRQQEQGDPVPKGLPLREAQLNKTMRSLGKAMKASDQEVEANVRSRSAVMRVAEKL.

S-adenosyl-L-methionine contacts are provided by residues 34 to 36 (GGH), Asp54, Phe80, Asp102, and Gln109.

Belongs to the methyltransferase superfamily. RsmH family.

The protein resides in the cytoplasm. It catalyses the reaction cytidine(1402) in 16S rRNA + S-adenosyl-L-methionine = N(4)-methylcytidine(1402) in 16S rRNA + S-adenosyl-L-homocysteine + H(+). Functionally, specifically methylates the N4 position of cytidine in position 1402 (C1402) of 16S rRNA. The sequence is that of Ribosomal RNA small subunit methyltransferase H from Cellvibrio japonicus (strain Ueda107) (Pseudomonas fluorescens subsp. cellulosa).